The chain runs to 422 residues: m7GpppN-mRNA hydrolase (422 aa).

Residues 95–226 (MGVPTYGAII…KLGLAPNKFF (132 aa)) form the Nudix hydrolase domain. A Nudix box motif is present at residues 129–150 (GKVNKEEAPHDCAAREVFEETG). Positions 144 and 148 each coordinate Mn(2+). Phosphoserine is present on residues Ser-246, Ser-247, Ser-249, Ser-276, and Ser-284. The disordered stretch occupies residues 247-347 (SDSDNGFSSA…GVHGQPAKQQ (101 aa)). Residues 249–258 (SDNGFSSAGS) are compositionally biased toward low complexity. The segment covering 303 to 312 (NHGEVSDLLK) has biased composition (basic and acidic residues).

This sequence belongs to the Nudix hydrolase family. DCP2 subfamily. As to quaternary structure, found in a mRNA decay complex with LSM1, LSM3, LSM4, EXOSC2, EXOSC4, EXOSC10, PARN, XRN1, CNOT6, UPF1, UPF2 and UPF3B. Forms a complex with DCP1A, EDC3, DDX6 and EDC4/HEDLS, within this complex directly interacts with EDC4/HEDLS. Interacts with DPC1B, UPF1, UPF2 and UPF3B. Associates with polysomes. Interacts (via N-terminus and C-terminus) with TRIM21 (via N-terminus and C-terminus). Interacts with LIMD1, WTIP and AJUBA. Interacts with DDX17 in an RNA-dependent manner. Interacts with ZC3HAV1. Interacts with APOBEC3G in an RNA-dependent manner. Interacts with ZFP36L1 (via N-terminus). Interacts with NBDY. Mn(2+) serves as cofactor. Mg(2+) is required as a cofactor. Strongly expressed in brain and testis. Weakly expressed in lung. Not detected in heart, liver, kidney and muscle (at protein level).

Its subcellular location is the cytoplasm. It is found in the P-body. The protein localises to the nucleus. It catalyses the reaction a 5'-end (N(7)-methyl 5'-triphosphoguanosine)-ribonucleoside in mRNA + H2O = N(7)-methyl-GDP + a 5'-end phospho-ribonucleoside in mRNA + 2 H(+). In terms of biological role, decapping metalloenzyme that catalyzes the cleavage of the cap structure on mRNAs. Removes the 7-methyl guanine cap structure from mRNA molecules, yielding a 5'-phosphorylated mRNA fragment and 7m-GDP. Necessary for the degradation of mRNAs, both in normal mRNA turnover and in nonsense-mediated mRNA decay. Plays a role in replication-dependent histone mRNA degradation. Has higher activity towards mRNAs that lack a poly(A) tail. Has no activity towards a cap structure lacking an RNA moiety. The presence of a N(6)-methyladenosine methylation at the second transcribed position of mRNAs (N(6),2'-O-dimethyladenosine cap; m6A(m)) provides resistance to DCP2-mediated decapping. Blocks autophagy in nutrient-rich conditions by repressing the expression of ATG-related genes through degradation of their transcripts. The protein is m7GpppN-mRNA hydrolase (Dcp2) of Mus musculus (Mouse).